A 246-amino-acid polypeptide reads, in one-letter code: UDP-2,3-diacylglucosamine hydrolase (246 aa).

Asp8, His10, Asp41, Asn79, and His114 together coordinate Mn(2+). Substrate is bound at residue Asn79 to Arg80. Substrate contacts are provided by Asp122, Ser160, Asn164, Lys167, and His195. Mn(2+)-binding residues include His195 and His197.

This sequence belongs to the LpxH family. Requires Mn(2+) as cofactor.

It is found in the cell inner membrane. The enzyme catalyses UDP-2-N,3-O-bis[(3R)-3-hydroxytetradecanoyl]-alpha-D-glucosamine + H2O = 2-N,3-O-bis[(3R)-3-hydroxytetradecanoyl]-alpha-D-glucosaminyl 1-phosphate + UMP + 2 H(+). It functions in the pathway glycolipid biosynthesis; lipid IV(A) biosynthesis; lipid IV(A) from (3R)-3-hydroxytetradecanoyl-[acyl-carrier-protein] and UDP-N-acetyl-alpha-D-glucosamine: step 4/6. Its function is as follows. Hydrolyzes the pyrophosphate bond of UDP-2,3-diacylglucosamine to yield 2,3-diacylglucosamine 1-phosphate (lipid X) and UMP by catalyzing the attack of water at the alpha-P atom. Involved in the biosynthesis of lipid A, a phosphorylated glycolipid that anchors the lipopolysaccharide to the outer membrane of the cell. The protein is UDP-2,3-diacylglucosamine hydrolase of Chromohalobacter salexigens (strain ATCC BAA-138 / DSM 3043 / CIP 106854 / NCIMB 13768 / 1H11).